The primary structure comprises 372 residues: Putative neuropeptide precursor protein (372 aa).

A signal peptide spans 1-17; it reads MLLFSLTAITAVLAVSA. Disordered regions lie at residues 18–89 and 136–208; these read VPTP…SNGE and VTKS…KRDS. Over residues 19 to 31 the composition is skewed to polar residues; that stretch reads PTPSNNKDGSTIS. Positions 38 to 57 are enriched in basic and acidic residues; the sequence is DQTKDDNRSLFLNKSDKNDL. Residues 72–89 are compositionally biased toward polar residues; sequence GYDQTVDQRFDSPQSNGE. Low complexity predominate over residues 177–191; sequence GGAAASAKTATKNSG.

May be proteolytically processed to give rise to a number of active peptides. In terms of tissue distribution, detected in the brain and frontal ganglion and in the axons connecting to the corpus cardiacum and corpus allatum (at protein level). Detected in the brain-subesophageal ganglion (brain-SG) complex, fat body, midgut and ovary. Expression in the brain-SG complex is 2-3 times higher than in the other tissues.

It is found in the cytoplasm. Its subcellular location is the secreted. The chain is Putative neuropeptide precursor protein from Bombyx mori (Silk moth).